Here is a 173-residue protein sequence, read N- to C-terminus: Probable chemoreceptor glutamine deamidase CheD 2 (173 aa).

Belongs to the CheD family.

The enzyme catalyses L-glutaminyl-[protein] + H2O = L-glutamyl-[protein] + NH4(+). In terms of biological role, probably deamidates glutamine residues to glutamate on methyl-accepting chemotaxis receptors (MCPs), playing an important role in chemotaxis. The chain is Probable chemoreceptor glutamine deamidase CheD 2 from Albidiferax ferrireducens (strain ATCC BAA-621 / DSM 15236 / T118) (Rhodoferax ferrireducens).